The primary structure comprises 348 residues: DnaJ homolog subfamily B member 5 (348 aa).

The J domain occupies 4–68 (DYYKILGIPS…KKRGLYDQYG (65 aa)).

The protein is DnaJ homolog subfamily B member 5 (DNAJB5) of Bos taurus (Bovine).